Consider the following 71-residue polypeptide: Phosphatidylinositol N-acetylglucosaminyltransferase subunit Y (71 aa).

Residues M1 to L3 lie on the Cytoplasmic side of the membrane. Residues S4 to V26 form a helical membrane-spanning segment. Topologically, residues E27–S44 are lumenal. Residues L45–I65 form a helical membrane-spanning segment. Topologically, residues K66 to N71 are cytoplasmic.

As to quaternary structure, component of the glycosylphosphatidylinositol-N-acetylglucosaminyltransferase (GPI-GnT) complex composed at least by PIGA, PIGC, PIGH, PIGP, PIGQ, PIGY and DPM2. Interacts directly with PIGA; this interaction regulates glycosylphosphatidylinositol-N-acetylglucosaminyltransferase activity. Does not interact with Ras proteins.

It is found in the endoplasmic reticulum membrane. It functions in the pathway glycolipid biosynthesis; glycosylphosphatidylinositol-anchor biosynthesis. Part of the glycosylphosphatidylinositol-N-acetylglucosaminyltransferase (GPI-GnT) complex that catalyzes the transfer of N-acetylglucosamine from UDP-N-acetylglucosamine to phosphatidylinositol and participates in the first step of GPI biosynthesis. May act by regulating the catalytic subunit PIGA. In Homo sapiens (Human), this protein is Phosphatidylinositol N-acetylglucosaminyltransferase subunit Y.